A 264-amino-acid polypeptide reads, in one-letter code: ATP synthase subunit a (264 aa).

6 helical membrane passes run 29-49 (TWHI…LWIF), 87-107 (NALI…MNFM), 134-154 (DVNI…YYSI), 177-197 (IPVN…SLAL), 208-228 (LIFI…SLGV), and 235-255 (LIFH…LTIV).

It belongs to the ATPase A chain family. As to quaternary structure, F-type ATPases have 2 components, CF(1) - the catalytic core - and CF(0) - the membrane proton channel. CF(1) has five subunits: alpha(3), beta(3), gamma(1), delta(1), epsilon(1). CF(0) has three main subunits: a(1), b(2) and c(9-12). The alpha and beta chains form an alternating ring which encloses part of the gamma chain. CF(1) is attached to CF(0) by a central stalk formed by the gamma and epsilon chains, while a peripheral stalk is formed by the delta and b chains.

The protein resides in the cell inner membrane. In terms of biological role, key component of the proton channel; it plays a direct role in the translocation of protons across the membrane. The sequence is that of ATP synthase subunit a from Shewanella sp. (strain MR-4).